Here is a 261-residue protein sequence, read N- to C-terminus: 4-hydroxy-tetrahydrodipicolinate reductase (261 aa).

9 to 14 (GCLGRM) contacts NAD(+). Residue arginine 36 participates in NADP(+) binding. NAD(+) is bound by residues 97 to 99 (GTT) and 118 to 121 (SANM). The active-site Proton donor/acceptor is histidine 151. (S)-2,3,4,5-tetrahydrodipicolinate is bound at residue histidine 152. Catalysis depends on lysine 155, which acts as the Proton donor. 161-162 (GT) contributes to the (S)-2,3,4,5-tetrahydrodipicolinate binding site.

It belongs to the DapB family.

The protein localises to the cytoplasm. It carries out the reaction (S)-2,3,4,5-tetrahydrodipicolinate + NAD(+) + H2O = (2S,4S)-4-hydroxy-2,3,4,5-tetrahydrodipicolinate + NADH + H(+). The catalysed reaction is (S)-2,3,4,5-tetrahydrodipicolinate + NADP(+) + H2O = (2S,4S)-4-hydroxy-2,3,4,5-tetrahydrodipicolinate + NADPH + H(+). Its pathway is amino-acid biosynthesis; L-lysine biosynthesis via DAP pathway; (S)-tetrahydrodipicolinate from L-aspartate: step 4/4. Its function is as follows. Catalyzes the conversion of 4-hydroxy-tetrahydrodipicolinate (HTPA) to tetrahydrodipicolinate. This is 4-hydroxy-tetrahydrodipicolinate reductase from Wolbachia pipientis wMel.